A 137-amino-acid polypeptide reads, in one-letter code: Urease subunit beta (137 aa).

A disordered region spans residues 118 to 137 (IIAEENKVSENANKESGYNR). The segment covering 126-137 (SENANKESGYNR) has biased composition (polar residues).

Belongs to the urease beta subunit family. Heterotrimer of UreA (gamma), UreB (beta) and UreC (alpha) subunits. Three heterotrimers associate to form the active enzyme.

It is found in the cytoplasm. The enzyme catalyses urea + 2 H2O + H(+) = hydrogencarbonate + 2 NH4(+). It functions in the pathway nitrogen metabolism; urea degradation; CO(2) and NH(3) from urea (urease route): step 1/1. The chain is Urease subunit beta from Staphylococcus xylosus.